The sequence spans 311 residues: N-acetyl-gamma-glutamyl-phosphate reductase (311 aa).

Cys-117 is a catalytic residue.

The protein belongs to the NAGSA dehydrogenase family. Type 2 subfamily.

The protein resides in the cytoplasm. The catalysed reaction is N-acetyl-L-glutamate 5-semialdehyde + phosphate + NADP(+) = N-acetyl-L-glutamyl 5-phosphate + NADPH + H(+). It functions in the pathway amino-acid biosynthesis; L-arginine biosynthesis; N(2)-acetyl-L-ornithine from L-glutamate: step 3/4. In terms of biological role, catalyzes the NADPH-dependent reduction of N-acetyl-5-glutamyl phosphate to yield N-acetyl-L-glutamate 5-semialdehyde. The polypeptide is N-acetyl-gamma-glutamyl-phosphate reductase (Brucella anthropi (strain ATCC 49188 / DSM 6882 / CCUG 24695 / JCM 21032 / LMG 3331 / NBRC 15819 / NCTC 12168 / Alc 37) (Ochrobactrum anthropi)).